The following is a 427-amino-acid chain: MLDTVTLSPDIDALMNDIGRKAKAAARPLGFASTEAKNRALNAMADAILANSAHILAENAKDLKDVEGSEMLASFIDRLTLSDKRIAEMAEGIRAIAALADPVGEVIAAWDRPNGLKIERVRTPLGVIGVIFESRPNVTADAGALCLKAGNAVILRCGSDSRRSSQAIHACMVDGLKAARLPEHAIQLVPVTDRAAVGAMLRGLDGSIDVIVPRGGKSLVARVQSEARVPVFAHLEGLCHIYVDASADIEMAKKIVVNAKMRRTGICGAAETLLVDGAAIGTHLTPLLDVLTEAGCEIRGSAAVLKVAPGIKPATEEDWTTEYLDAIISVAVVDGISGAIAHIQTYSSNHTEAVIAEDPAVVERFFTEVDSAILLHNASTQFADGGEFGMGAEIGIATGKMHARGPVGVEQLTSFKYRVRGAGQTRP.

This sequence belongs to the gamma-glutamyl phosphate reductase family.

The protein localises to the cytoplasm. The enzyme catalyses L-glutamate 5-semialdehyde + phosphate + NADP(+) = L-glutamyl 5-phosphate + NADPH + H(+). It functions in the pathway amino-acid biosynthesis; L-proline biosynthesis; L-glutamate 5-semialdehyde from L-glutamate: step 2/2. In terms of biological role, catalyzes the NADPH-dependent reduction of L-glutamate 5-phosphate into L-glutamate 5-semialdehyde and phosphate. The product spontaneously undergoes cyclization to form 1-pyrroline-5-carboxylate. The polypeptide is Gamma-glutamyl phosphate reductase (Rhizobium etli (strain CIAT 652)).